We begin with the raw amino-acid sequence, 238 residues long: Uridylate kinase (238 aa).

An ATP-binding site is contributed by Lys12–Gly15. Positions Gly20–Gly25 are involved in allosteric activation by GTP. Residue Gly54 participates in UMP binding. ATP-binding residues include Gly55 and Arg59. UMP is bound by residues Asp74 and Thr135–Thr142. Positions 162, 168, and 171 each coordinate ATP.

Belongs to the UMP kinase family. In terms of assembly, homohexamer.

The protein localises to the cytoplasm. It carries out the reaction UMP + ATP = UDP + ADP. The protein operates within pyrimidine metabolism; CTP biosynthesis via de novo pathway; UDP from UMP (UMPK route): step 1/1. With respect to regulation, allosterically activated by GTP. Inhibited by UTP. In terms of biological role, catalyzes the reversible phosphorylation of UMP to UDP. This chain is Uridylate kinase, found in Histophilus somni (strain 129Pt) (Haemophilus somnus).